The primary structure comprises 488 residues: UDP-N-acetylmuramate--L-alanine ligase (488 aa).

127 to 133 (GTHGKTT) lines the ATP pocket.

Belongs to the MurCDEF family.

It is found in the cytoplasm. It catalyses the reaction UDP-N-acetyl-alpha-D-muramate + L-alanine + ATP = UDP-N-acetyl-alpha-D-muramoyl-L-alanine + ADP + phosphate + H(+). The protein operates within cell wall biogenesis; peptidoglycan biosynthesis. Cell wall formation. The chain is UDP-N-acetylmuramate--L-alanine ligase from Shewanella sp. (strain ANA-3).